A 250-amino-acid polypeptide reads, in one-letter code: 2,3-bisphosphoglycerate-dependent phosphoglycerate mutase (250 aa).

Substrate-binding positions include 8 to 15 (RHGESTWN), 21 to 22 (TG), R60, 87 to 90 (ERHY), K98, and 114 to 115 (RR). The active-site Tele-phosphohistidine intermediate is H9. The active-site Proton donor/acceptor is the E87. Residues 116-135 (SYDTPPPPLAANDPRSERSD) form a disordered region. 183-184 (GN) is a binding site for substrate.

Belongs to the phosphoglycerate mutase family. BPG-dependent PGAM subfamily. In terms of assembly, homodimer.

The catalysed reaction is (2R)-2-phosphoglycerate = (2R)-3-phosphoglycerate. The protein operates within carbohydrate degradation; glycolysis; pyruvate from D-glyceraldehyde 3-phosphate: step 3/5. Its function is as follows. Catalyzes the interconversion of 2-phosphoglycerate and 3-phosphoglycerate. The sequence is that of 2,3-bisphosphoglycerate-dependent phosphoglycerate mutase from Polaromonas naphthalenivorans (strain CJ2).